Reading from the N-terminus, the 909-residue chain is Phosphoenolpyruvate carboxylase (909 aa).

Active-site residues include His-151 and Lys-578.

This sequence belongs to the PEPCase type 1 family. The cofactor is Mg(2+).

The enzyme catalyses oxaloacetate + phosphate = phosphoenolpyruvate + hydrogencarbonate. Forms oxaloacetate, a four-carbon dicarboxylic acid source for the tricarboxylic acid cycle. The polypeptide is Phosphoenolpyruvate carboxylase (Caulobacter vibrioides (strain ATCC 19089 / CIP 103742 / CB 15) (Caulobacter crescentus)).